The chain runs to 206 residues: N-(5'-phosphoribosyl)anthranilate isomerase (206 aa).

Belongs to the TrpF family.

The catalysed reaction is N-(5-phospho-beta-D-ribosyl)anthranilate = 1-(2-carboxyphenylamino)-1-deoxy-D-ribulose 5-phosphate. It functions in the pathway amino-acid biosynthesis; L-tryptophan biosynthesis; L-tryptophan from chorismate: step 3/5. The polypeptide is N-(5'-phosphoribosyl)anthranilate isomerase (Pseudomonas syringae pv. tomato (strain ATCC BAA-871 / DC3000)).